The sequence spans 394 residues: Junctional adhesion molecule-like (394 aa).

The signal sequence occupies residues 1 to 19 (MFCPLKLILLPVLLDYSLG). Ig-like V-type domains are found at residues 20–132 (LNDL…KAVV) and 137–250 (PEEP…IVLH). Over 20–275 (LNDLNVSPPE…RPLVLGGNQL (256 aa)) the chain is Extracellular. Disulfide bonds link cysteine 42–cysteine 116 and cysteine 155–cysteine 234. Asparagine 76 and asparagine 231 each carry an N-linked (GlcNAc...) asparagine glycan. A helical membrane pass occupies residues 276-296 (VIIVGIVCATILLLPVLILIV). Topologically, residues 297-394 (KKTCGNKSSV…GGMPKTQQAF (98 aa)) are cytoplasmic. Residues 369-394 (PSLRSDRNNSLEKKSGGGMPKTQQAF) are disordered. The segment covering 372–383 (RSDRNNSLEKKS) has biased composition (basic and acidic residues).

Belongs to the immunoglobulin superfamily. In terms of assembly, homodimer; active form in leukocyte-endothelial cell adhesion. Interacts (homodimeric form) with CXADR. Interacts (via cytoplasmic domain) with the PI3 kinase; upon CXADR-binding. Interacts with ITGA4 and ITGB1; integrin alpha-4/beta-1 may regulate leukocyte to endothelial cells adhesion by controlling JAML homodimerization. As to expression, expression is restricted to the hematopoietic tissues with the exception of liver. Expressed in fetal liver, spleen and thymus. Preferentially expressed by mature leukocytes (at protein level).

It is found in the cell membrane. Its subcellular location is the cell junction. Its function is as follows. Transmembrane protein of the plasma membrane of leukocytes that control their migration and activation through interaction with CXADR, a plasma membrane receptor found on adjacent epithelial and endothelial cells. The interaction between both receptors mediates the activation of gamma-delta T-cells, a subpopulation of T-cells residing in epithelia and involved in tissue homeostasis and repair. Upon epithelial CXADR-binding, JAML induces downstream cell signaling events in gamma-delta T-cells through PI3-kinase and MAP kinases. It results in proliferation and production of cytokines and growth factors by T-cells that in turn stimulate epithelial tissues repair. It also controls the transmigration of leukocytes within epithelial and endothelial tissues through adhesive interactions with epithelial and endothelial CXADR. The chain is Junctional adhesion molecule-like from Homo sapiens (Human).